Consider the following 154-residue polypeptide: uncharacterized protein (154 aa).

The next 4 helical transmembrane spans lie at 39–61 (LLIF…FFAR), 65–87 (LPYI…VSLL), 94–113 (VESL…RVFI), and 128–150 (LLIN…SPFT).

Its subcellular location is the cell membrane. This is an uncharacterized protein from Aquifex aeolicus (strain VF5).